The following is a 189-amino-acid chain: Nucleolar protein 16 (189 aa).

Over residues 1-33 (MARDVKKRGKPAYTNRRNRQKYLKKKDNKKKLS) the composition is skewed to basic residues. The disordered stretch occupies residues 1-34 (MARDVKKRGKPAYTNRRNRQKYLKKKDNKKKLSK).

It belongs to the NOP16 family.

It is found in the nucleus. The protein resides in the nucleolus. The polypeptide is Nucleolar protein 16 (Caenorhabditis elegans).